Consider the following 227-residue polypeptide: Large ribosomal subunit protein uL3 (227 aa).

At Q158 the chain carries N5-methylglutamine.

Belongs to the universal ribosomal protein uL3 family. In terms of assembly, part of the 50S ribosomal subunit. Forms a cluster with proteins L14 and L19. Methylated by PrmB.

Functionally, one of the primary rRNA binding proteins, it binds directly near the 3'-end of the 23S rRNA, where it nucleates assembly of the 50S subunit. The chain is Large ribosomal subunit protein uL3 from Polaromonas sp. (strain JS666 / ATCC BAA-500).